Consider the following 117-residue polypeptide: Large ribosomal subunit protein uL18 (117 aa).

Belongs to the universal ribosomal protein uL18 family. In terms of assembly, part of the 50S ribosomal subunit; part of the 5S rRNA/L5/L18/L25 subcomplex. Contacts the 5S and 23S rRNAs.

Functionally, this is one of the proteins that bind and probably mediate the attachment of the 5S RNA into the large ribosomal subunit, where it forms part of the central protuberance. In Proteus mirabilis (strain HI4320), this protein is Large ribosomal subunit protein uL18.